A 137-amino-acid chain; its full sequence is Large ribosomal subunit protein uL16 (137 aa).

It belongs to the universal ribosomal protein uL16 family. As to quaternary structure, part of the 50S ribosomal subunit.

Its function is as follows. Binds 23S rRNA and is also seen to make contacts with the A and possibly P site tRNAs. This chain is Large ribosomal subunit protein uL16, found in Dinoroseobacter shibae (strain DSM 16493 / NCIMB 14021 / DFL 12).